The chain runs to 161 residues: Nucleotide-binding protein Shew_2893 (161 aa).

This sequence belongs to the YajQ family.

In terms of biological role, nucleotide-binding protein. The polypeptide is Nucleotide-binding protein Shew_2893 (Shewanella loihica (strain ATCC BAA-1088 / PV-4)).